The primary structure comprises 429 residues: MKFLLVLALCAVVYAKHEAYIGWKSYYVGVATDAQAKALEPLIQKYELDFLSHPTKSREGVVLVKPQHQAGFVQDIEAGGITYRIHADDVKRQLEFDDQLIEMQRMSSFTRTAGRQLPYDNYQELEVIDEYLDYIGEKYPDVATVVNAAESFEGRPIKYIKISTTNFEDENKPVIFIDGGIHAREWISPPSVTWAIHKLVEDVTENDLLEKFDWILLPVVNPDGYKYTFTNERFWRKTRSTNNNPLSQICRGADGNRNFDFVWNSIGTSNSPCSDIYAGTSAFSEVETRVVRDILHEHLARMALYLTMHSFGSMILYPWGHDGSLSQNALGLHTVGVAMASVIQSNALPNFPPYTVGNSALVIGYYIAGSSEDYAHSIGVPLSYTYELPGLSSGWDGFHLPPQYIEQVCRETWEGIVVGARRAGDLFRK.

An N-terminal signal peptide occupies residues 1–15; the sequence is MKFLLVLALCAVVYA. The Peptidase M14 domain maps to 121–423; that stretch reads NYQELEVIDE…EGIVVGARRA (303 aa). Residues His-182 and Glu-185 each coordinate Zn(2+). Substrate-binding positions include 182–185, Arg-236, and 256–257; these read HARE and NR. A disulfide bridge connects residues Cys-250 and Cys-273. Residue His-309 coordinates Zn(2+). Residues 310 to 311 and Tyr-365 contribute to the substrate site; that span reads SF. Glu-387 acts as the Proton donor/acceptor in catalysis.

This sequence belongs to the peptidase M14 family. Zn(2+) serves as cofactor.

The protein localises to the secreted. The catalysed reaction is Preferential release of a C-terminal lysine or arginine amino acid.. Highly resistant to inhibition by potato carboxypeptidase inhibitor (PCI). Moderately inhibited by leech carboxypeptidase inhibitor (LCI) and tick carboxypeptidase inhibitor (TCI). Functionally, metalloprotease which cleaves a single amino acid from the C-terminal end of polypeptide chains. Shows a strong preference for peptides with a terminal lysine residue. The protein is Carboxypeptidase B of Helicoverpa zea (Corn earworm moth).